Reading from the N-terminus, the 212-residue chain is Glycerol-3-phosphate acyltransferase (212 aa).

4 consecutive transmembrane segments (helical) span residues Ile-3–Ser-23, Asp-78–Phe-98, Ala-115–Phe-135, and Phe-155–Trp-177.

This sequence belongs to the PlsY family. In terms of assembly, probably interacts with PlsX.

It is found in the cell inner membrane. The catalysed reaction is an acyl phosphate + sn-glycerol 3-phosphate = a 1-acyl-sn-glycero-3-phosphate + phosphate. The protein operates within lipid metabolism; phospholipid metabolism. In terms of biological role, catalyzes the transfer of an acyl group from acyl-phosphate (acyl-PO(4)) to glycerol-3-phosphate (G3P) to form lysophosphatidic acid (LPA). This enzyme utilizes acyl-phosphate as fatty acyl donor, but not acyl-CoA or acyl-ACP. This is Glycerol-3-phosphate acyltransferase from Burkholderia lata (strain ATCC 17760 / DSM 23089 / LMG 22485 / NCIMB 9086 / R18194 / 383).